The sequence spans 455 residues: Bifunctional protein GlmU (455 aa).

Positions 1–228 are pyrophosphorylase; it reads MNNTLTTIIL…EFEIEGVNNR (228 aa). UDP-N-acetyl-alpha-D-glucosamine contacts are provided by residues 10–13, Lys-24, Gln-75, 80–81, 102–104, Gly-138, Glu-153, Asn-168, and Asn-226; these read LAAG, GT, and YGD. Asp-104 serves as a coordination point for Mg(2+). Residue Asn-226 participates in Mg(2+) binding. Residues 229–249 are linker; it reads QQLAQLERKWQAKLVEDLQVQ. The N-acetyltransferase stretch occupies residues 250–455; sequence GVQFADPNRV…DNYQRPEKKK (206 aa). UDP-N-acetyl-alpha-D-glucosamine contacts are provided by Arg-332 and Lys-350. Residue His-362 is the Proton acceptor of the active site. The UDP-N-acetyl-alpha-D-glucosamine site is built by Tyr-365 and Asn-376. Acetyl-CoA is bound by residues Ala-379, 385 to 386, Ala-422, and Arg-439; that span reads NY.

The protein in the N-terminal section; belongs to the N-acetylglucosamine-1-phosphate uridyltransferase family. This sequence in the C-terminal section; belongs to the transferase hexapeptide repeat family. Homotrimer. Mg(2+) serves as cofactor.

It is found in the cytoplasm. It carries out the reaction alpha-D-glucosamine 1-phosphate + acetyl-CoA = N-acetyl-alpha-D-glucosamine 1-phosphate + CoA + H(+). It catalyses the reaction N-acetyl-alpha-D-glucosamine 1-phosphate + UTP + H(+) = UDP-N-acetyl-alpha-D-glucosamine + diphosphate. It functions in the pathway nucleotide-sugar biosynthesis; UDP-N-acetyl-alpha-D-glucosamine biosynthesis; N-acetyl-alpha-D-glucosamine 1-phosphate from alpha-D-glucosamine 6-phosphate (route II): step 2/2. It participates in nucleotide-sugar biosynthesis; UDP-N-acetyl-alpha-D-glucosamine biosynthesis; UDP-N-acetyl-alpha-D-glucosamine from N-acetyl-alpha-D-glucosamine 1-phosphate: step 1/1. The protein operates within bacterial outer membrane biogenesis; LPS lipid A biosynthesis. Catalyzes the last two sequential reactions in the de novo biosynthetic pathway for UDP-N-acetylglucosamine (UDP-GlcNAc). The C-terminal domain catalyzes the transfer of acetyl group from acetyl coenzyme A to glucosamine-1-phosphate (GlcN-1-P) to produce N-acetylglucosamine-1-phosphate (GlcNAc-1-P), which is converted into UDP-GlcNAc by the transfer of uridine 5-monophosphate (from uridine 5-triphosphate), a reaction catalyzed by the N-terminal domain. The polypeptide is Bifunctional protein GlmU (Psychrobacter sp. (strain PRwf-1)).